We begin with the raw amino-acid sequence, 703 residues long: uncharacterized protein (703 aa).

Residues 1–23 (MKQIMIFLTSFMLLAMTGQTALA) form the signal peptide. Residues 673–693 (MYIGVLALIMVVAAVFIWIAV) traverse the membrane as a helical segment.

The protein localises to the cell membrane. This is an uncharacterized protein from Bacillus subtilis (strain 168).